Here is a 121-residue protein sequence, read N- to C-terminus: Chromosome transmission fidelity protein 8 homolog (121 aa).

Belongs to the CTF8 family. As to quaternary structure, component of the CTF18-RFC complex, which consists of CTF18, CTF8, DSCC1, RFC2, RFC3, RFC4 and RFC5. The CTF18-RFC complex does not interact with the Rad9/Rad1/Hus1 complex. The CTF18-RFC complex interacts with POLH. CTF18/CTF8/DSCC1 associate with PCNA. CTF8 exists as a dimer with DSCC1.

The protein localises to the nucleus. Its function is as follows. Chromosome cohesion factor involved in sister chromatid cohesion and fidelity of chromosome transmission. Component of one of the cell nuclear antigen loader complexes, CTF18-replication factor C (CTF18-RFC), which consists of CTF18, CTF8, DSCC1, RFC2, RFC3, RFC4 and RFC5. The CTF18-RFC complex binds to single-stranded and primed DNAs and has weak ATPase activity that is stimulated the presence of primed DNA, replication protein A (RPA) and proliferating cell nuclear antigen (PCNA). The CTF18-RFC complex catalyzes the ATP-dependent loading of PCNA onto primed and gapped DNA. It also interacts with and stimulates POLH, which is suggestive of a protein network that coordinates DNA repair, recombination and chromosome cohesion reactions with replication fork progression. This is Chromosome transmission fidelity protein 8 homolog from Homo sapiens (Human).